A 197-amino-acid polypeptide reads, in one-letter code: Protein GrpE (197 aa).

The segment covering 1–27 (MTKQEKAENQEKPTEETVEETPKKETP) has biased composition (basic and acidic residues). The tract at residues 1–50 (MTKQEKAENQEKPTEETVEETPKKETPFEPVMEADEVEETTEAQAPVEEA) is disordered. Positions 32–41 (MEADEVEETT) are enriched in acidic residues.

The protein belongs to the GrpE family. In terms of assembly, homodimer.

It is found in the cytoplasm. Participates actively in the response to hyperosmotic and heat shock by preventing the aggregation of stress-denatured proteins, in association with DnaK and GrpE. It is the nucleotide exchange factor for DnaK and may function as a thermosensor. Unfolded proteins bind initially to DnaJ; upon interaction with the DnaJ-bound protein, DnaK hydrolyzes its bound ATP, resulting in the formation of a stable complex. GrpE releases ADP from DnaK; ATP binding to DnaK triggers the release of the substrate protein, thus completing the reaction cycle. Several rounds of ATP-dependent interactions between DnaJ, DnaK and GrpE are required for fully efficient folding. The protein is Protein GrpE of Latilactobacillus sakei (Lactobacillus sakei).